Consider the following 244-residue polypeptide: 7-cyano-7-deazaguanine synthase (244 aa).

F14–V24 serves as a coordination point for ATP. C202, C217, C220, and C223 together coordinate Zn(2+).

It belongs to the QueC family. Zn(2+) serves as cofactor.

It catalyses the reaction 7-carboxy-7-deazaguanine + NH4(+) + ATP = 7-cyano-7-deazaguanine + ADP + phosphate + H2O + H(+). The protein operates within purine metabolism; 7-cyano-7-deazaguanine biosynthesis. In terms of biological role, catalyzes the ATP-dependent conversion of 7-carboxy-7-deazaguanine (CDG) to 7-cyano-7-deazaguanine (preQ(0)). This is 7-cyano-7-deazaguanine synthase from Burkholderia vietnamiensis (strain G4 / LMG 22486) (Burkholderia cepacia (strain R1808)).